Here is a 160-residue protein sequence, read N- to C-terminus: Single-stranded DNA-binding protein 3 (160 aa).

The SSB domain occupies 2 to 104 (MNRVVLVGRL…IVAESVQFLE (103 aa)). The segment covering 106–133 (KQNGAGGSTSNNNQSETNYSNDNKTSSY) has biased composition (polar residues). The interval 106 to 160 (KQNGAGGSTSNNNQSETNYSNDNKTSSYRADRSQNGDSFANEGAPVDINPDDLPF) is disordered.

Homotetramer.

The polypeptide is Single-stranded DNA-binding protein 3 (ssb3) (Listeria innocua serovar 6a (strain ATCC BAA-680 / CLIP 11262)).